The following is a 327-amino-acid chain: Cysteine synthase (327 aa).

N6-(pyridoxal phosphate)lysine is present on K65. Residues N95, 200 to 204 (GTGGT), and S282 each bind pyridoxal 5'-phosphate.

It belongs to the cysteine synthase/cystathionine beta-synthase family. It depends on pyridoxal 5'-phosphate as a cofactor.

The enzyme catalyses O-acetyl-L-serine + hydrogen sulfide = L-cysteine + acetate. The protein operates within amino-acid biosynthesis; L-cysteine biosynthesis; L-cysteine from L-serine: step 2/2. The sequence is that of Cysteine synthase (cysM) from Aquifex aeolicus (strain VF5).